The primary structure comprises 385 residues: uncharacterized protein (385 aa).

K194 is modified (N6-(pyridoxal phosphate)lysine).

This sequence belongs to the class-V pyridoxal-phosphate-dependent aminotransferase family. The cofactor is pyridoxal 5'-phosphate.

This is an uncharacterized protein from Methanocaldococcus jannaschii (strain ATCC 43067 / DSM 2661 / JAL-1 / JCM 10045 / NBRC 100440) (Methanococcus jannaschii).